The chain runs to 451 residues: AAA-ATPase At3g28570, mitochondrial (451 aa).

Residues 1-48 (MFAENLTRIGSNVAGLFFVWSTLKRYFPRQIQQLLFNAIQRIPIFKRL) constitute a mitochondrion transit peptide. 243–250 (GPPGTGKS) provides a ligand contact to ATP.

The protein belongs to the AAA ATPase family. BCS1 subfamily. Mg(2+) serves as cofactor.

The protein resides in the mitochondrion. The enzyme catalyses ATP + H2O = ADP + phosphate + H(+). In Arabidopsis thaliana (Mouse-ear cress), this protein is AAA-ATPase At3g28570, mitochondrial.